The primary structure comprises 200 residues: Recombination protein RecR (200 aa).

A C4-type zinc finger spans residues cysteine 58–cysteine 75. Residues serine 82–proline 177 form the Toprim domain.

This sequence belongs to the RecR family.

Its function is as follows. May play a role in DNA repair. It seems to be involved in an RecBC-independent recombinational process of DNA repair. It may act with RecF and RecO. This Chlamydia muridarum (strain MoPn / Nigg) protein is Recombination protein RecR.